The chain runs to 620 residues: LEAF RUST 10 DISEASE-RESISTANCE LOCUS RECEPTOR-LIKE PROTEIN KINASE-like 2.3 (620 aa).

The N-terminal stretch at 1–30 is a signal peptide; the sequence is MDSLSSMGFQTASFFLILLFLFYHLPCVPS. Residues 31 to 256 lie on the Extracellular side of the membrane; sequence QQERSRLCKP…NNGTYSDNRP (226 aa). Residues asparagine 75, asparagine 85, asparagine 93, asparagine 132, asparagine 148, asparagine 162, asparagine 189, asparagine 231, and asparagine 248 are each glycosylated (N-linked (GlcNAc...) asparagine). A helical membrane pass occupies residues 257 to 277; it reads FLVTIGTVLGSILCVCVVLFL. The Cytoplasmic portion of the chain corresponds to 278 to 620; that stretch reads AFYLNERRIA…SVESSIYSEV (343 aa). The Protein kinase domain occupies 314–596; that stretch reads KSFTEVVGRG…SLDPPPKPLL (283 aa). Residues 320–328 and lysine 342 contribute to the ATP site; that span reads VGRGGFGTV. Catalysis depends on aspartate 431, which acts as the Proton acceptor. The interval 586–620 is disordered; sequence DSLDPPPKPLLHMPMQNNNAESSQLSVESSIYSEV. Polar residues predominate over residues 600 to 620; the sequence is MQNNNAESSQLSVESSIYSEV.

It belongs to the protein kinase superfamily. Ser/Thr protein kinase family.

Its subcellular location is the membrane. It catalyses the reaction L-seryl-[protein] + ATP = O-phospho-L-seryl-[protein] + ADP + H(+). The enzyme catalyses L-threonyl-[protein] + ATP = O-phospho-L-threonyl-[protein] + ADP + H(+). The polypeptide is LEAF RUST 10 DISEASE-RESISTANCE LOCUS RECEPTOR-LIKE PROTEIN KINASE-like 2.3 (Arabidopsis thaliana (Mouse-ear cress)).